The primary structure comprises 432 residues: Ribosomal protein uS12 methylthiotransferase RimO (432 aa).

The MTTase N-terminal domain occupies 1 to 112 (MKIGVVSLGC…ILNYLGLKEK (112 aa)). 6 residues coordinate [4Fe-4S] cluster: cysteine 10, cysteine 46, cysteine 75, cysteine 134, cysteine 138, and cysteine 141. One can recognise a Radical SAM core domain in the interval 120-350 (STPRSYAYLK…MAIQRGITRK (231 aa)). The 70-residue stretch at 353–422 (EEFLGKEIEV…DYDLAGRDTE (70 aa)) folds into the TRAM domain.

It belongs to the methylthiotransferase family. RimO subfamily. [4Fe-4S] cluster serves as cofactor.

Its subcellular location is the cytoplasm. It catalyses the reaction L-aspartate(89)-[ribosomal protein uS12]-hydrogen + (sulfur carrier)-SH + AH2 + 2 S-adenosyl-L-methionine = 3-methylsulfanyl-L-aspartate(89)-[ribosomal protein uS12]-hydrogen + (sulfur carrier)-H + 5'-deoxyadenosine + L-methionine + A + S-adenosyl-L-homocysteine + 2 H(+). Its function is as follows. Catalyzes the methylthiolation of an aspartic acid residue of ribosomal protein uS12. This chain is Ribosomal protein uS12 methylthiotransferase RimO, found in Aquifex aeolicus (strain VF5).